A 99-amino-acid polypeptide reads, in one-letter code: Class II hydrophobin 2 (99 aa).

The signal sequence occupies residues 1 to 15 (MKFFVVAALFAGALA). 2 disulfide bridges follow: Cys-30/Cys-79 and Cys-40/Cys-70.

The protein belongs to the cerato-ulmin hydrophobin family. In terms of assembly, homotetramer. Further self-assembles to form highly ordered films at water-air interfaces through intermolecular interactions.

The protein resides in the secreted. It localises to the cell wall. Its function is as follows. Aerial growth, conidiation, and dispersal of filamentous fungi in the environment rely upon a capability of their secreting small amphipathic proteins called hydrophobins (HPBs) with low sequence identity. Class I can self-assemble into an outermost layer of rodlet bundles on aerial cell surfaces, conferring cellular hydrophobicity that supports fungal growth, development and dispersal; whereas Class II form highly ordered films at water-air interfaces through intermolecular interactions but contribute nothing to the rodlet structure. HYD2 is a class II hydrophobin that contributes to the fruiting body development. The sequence is that of Class II hydrophobin 2 from Cordyceps militaris (Caterpillar fungus).